Reading from the N-terminus, the 1115-residue chain is Tbc2 translation factor, chloroplastic (1115 aa).

Low complexity-rich tracts occupy residues 69-87 and 163-175; these read TASV…QLSS and RRAG…SGRA. Disordered stretches follow at residues 69–90 and 163–210; these read TASV…SKAL and RRAG…SSSS. Over residues 176-186 the composition is skewed to gly residues; that stretch reads RGWGSGPGRNG. Over residues 187–210 the composition is skewed to low complexity; the sequence is SGSSSVSVNGSGSSSNGSSSSSSS. 9 consecutive repeat copies span residues 483-521, 607-645, 685-723, 724-763, 764-803, 804-842, 843-880, 990-1029, and 1030-1068. A 9 X 38 AA approximate repeats region spans residues 483–1068; sequence LVLELSRARL…LRPPPEWLQA (586 aa).

As to quaternary structure, part of a 400 kDa complex which is not stably associated with RNA.

It localises to the plastid. The protein localises to the chloroplast stroma. Required for expression of the chloroplast encoded psbC mRNA, most likely for translation initiation. Interacts with the 5'-UTR of psbC. This Chlamydomonas reinhardtii (Chlamydomonas smithii) protein is Tbc2 translation factor, chloroplastic (TBC2).